We begin with the raw amino-acid sequence, 782 residues long: Cyclic nucleotide-gated channel beta-3 (782 aa).

Disordered stretches follow at residues 1-111 (MFKS…PKSK) and 147-168 (GDISSPEASPQTAKPTAVPSTQ). Residues 1-213 (MFKSLTIKSN…SIDSYTDRLY (213 aa)) are Cytoplasmic-facing. 2 stretches are compositionally biased toward basic and acidic residues: residues 13-25 (KPREENDENKQDP) and 57-73 (EESHAKMQDKISEKNSL). Composition is skewed to polar residues over residues 74-83 (RDLTTNPNHQ) and 152-168 (PEASPQTAKPTAVPSTQ). Residues 214–237 (LLWLLLVTIAYNWNCWLIPLRLVF) form a helical membrane-spanning segment. The Extracellular segment spans residues 238–244 (PYQTPDN). The chain crosses the membrane as a helical span at residues 245–265 (THYWFITDITCDIIYLCDMLL). The Cytoplasmic portion of the chain corresponds to 266-294 (IQPRLQFIKGGDIMVDSNELKRHYRSSTK). Residues 295–312 (FQLDVASVMPFDVFYLFF) form a helical membrane-spanning segment. The Extracellular segment spans residues 313–315 (GFN). The chain crosses the membrane as a helical span at residues 316–330 (PVFRMNRILKYTSFF). The Cytoplasmic portion of the chain corresponds to 331–343 (EFNHHLESIMDKA). The segment at 343-442 (AYIYRVIRTT…IGQMQDVIGA (100 aa)) is ion conduction pathway. A helical membrane pass occupies residues 344–366 (YIYRVIRTTGYLLYTLHINACIY). The Extracellular portion of the chain corresponds to 367–388 (YWASDYEGIGSTKWVYNGEGNK). The next 2 membrane-spanning stretches (helical) occupy residues 389-415 (YLRCYYWAVRTLITIGGLPEPQTSFEI) and 416-440 (VFQLLNFFSGVFVFSSLIGQMQDVI). Residues 402-405 (TIGG) form a selectivity filter region. Over 441 to 782 (GAATANQNNF…TIEVKEKAKQ (342 aa)) the chain is Cytoplasmic. A C-linker region spans residues 445-521 (ANQNNFRISM…SIISKVELFK (77 aa)). The tract at residues 525–641 (TQMIYDMLLR…LLMKKASVLL (117 aa)) is cyclic nucleotide-binding domain. 3',5'-cyclic GMP is bound by residues Gly-586, Glu-587, Arg-599, and Thr-600. The interval 692–724 (EQTIQKTSENSEEGGGKRREYEDKEREPSEKIL) is disordered. Positions 705 to 724 (GGGKRREYEDKEREPSEKIL) are enriched in basic and acidic residues.

The protein belongs to the cyclic nucleotide-gated cation channel (TC 1.A.1.5) family. CNGB3 subfamily. In terms of assembly, forms heterotetrameric channels composed of CNGA3 and CNGB3 subunits with 3:1 stoichiometry.

The protein resides in the cell membrane. It carries out the reaction Ca(2+)(in) = Ca(2+)(out). It catalyses the reaction Na(+)(in) = Na(+)(out). The catalysed reaction is K(+)(in) = K(+)(out). The enzyme catalyses NH4(+)(in) = NH4(+)(out). It carries out the reaction Rb(+)(in) = Rb(+)(out). It catalyses the reaction Li(+)(in) = Li(+)(out). The catalysed reaction is Cs(+)(in) = Cs(+)(out). In terms of biological role, pore-forming subunit of the cone cyclic nucleotide-gated channel. Mediates cone photoresponses at bright light converting transient changes in intracellular cGMP levels into electrical signals. In the dark, cGMP levels are high and keep the channel open enabling a steady inward current carried by Na(+) and Ca(2+) ions that leads to membrane depolarization and neurotransmitter release from synaptic terminals. Upon photon absorption cGMP levels decline leading to channel closure and membrane hyperpolarization that ultimately slows neurotransmitter release and signals the presence of light, the end point of the phototransduction cascade. Conducts cGMP- and cAMP-gated ion currents, with permeability for monovalent and divalent cations. In Canis lupus familiaris (Dog), this protein is Cyclic nucleotide-gated channel beta-3.